The following is a 105-amino-acid chain: Large ribosomal subunit protein bL21 (105 aa).

The protein belongs to the bacterial ribosomal protein bL21 family. As to quaternary structure, part of the 50S ribosomal subunit. Contacts protein L20.

In terms of biological role, this protein binds to 23S rRNA in the presence of protein L20. In Frankia casuarinae (strain DSM 45818 / CECT 9043 / HFP020203 / CcI3), this protein is Large ribosomal subunit protein bL21.